We begin with the raw amino-acid sequence, 358 residues long: ATDIRQVVDSTVEPLMQQQDIAGLSVAVIQNGKAQYFNYGVANKDSKQPITENTLFEIGSVSKTFTATLAGYALANGKLKLSDPASQYLPALRGDKFDHISLLNLGTYTAGGLPLQFPEESDNTGKMISYYQHWKPAFAPGTQRLYSNPSIGLFGHLAAQSLGQPFEKLMEQTVLPKLGLKHTFISVPETQMSLYAQGYDKAGKPVRVSPGALDAEAYGIKTSTSDLIHYVEVNMHPAKLEKPLQQAIAATHTGYYTVDGMTQGLGWEMYPYPIKVDALVEGNSTQMAMEPHKVNWLTPPQAAPLDTLVNKTGSTGGFGAYVAYVPSKGLGVVILANKNYPNAERVKAAHAILSAMDQ.

Catalysis depends on Ser-60, which acts as the Acyl-ester intermediate. Tyr-146 serves as the catalytic Proton acceptor. 311 to 313 (KTG) contacts substrate.

The protein belongs to the class-C beta-lactamase family.

It localises to the periplasm. The catalysed reaction is a beta-lactam + H2O = a substituted beta-amino acid. Functionally, this protein is a serine beta-lactamase with a substrate specificity for cephalosporins. The chain is Beta-lactamase from Pseudomonas fluorescens.